Here is a 681-residue protein sequence, read N- to C-terminus: Methionine--tRNA ligase (681 aa).

The short motif at 14–24 (PYANGSIHLGH) is the 'HIGH' region element. Zn(2+)-binding residues include Cys-145, Cys-148, Cys-158, and Cys-161. The 'KMSKS' region motif lies at 331 to 335 (KMSKS). Lys-334 is a binding site for ATP. Residues 579 to 681 (AFAAVDLRIA…AGAKPGQRVH (103 aa)) enclose the tRNA-binding domain.

Belongs to the class-I aminoacyl-tRNA synthetase family. MetG type 1 subfamily. As to quaternary structure, homodimer. It depends on Zn(2+) as a cofactor.

The protein localises to the cytoplasm. It catalyses the reaction tRNA(Met) + L-methionine + ATP = L-methionyl-tRNA(Met) + AMP + diphosphate. Its function is as follows. Is required not only for elongation of protein synthesis but also for the initiation of all mRNA translation through initiator tRNA(fMet) aminoacylation. The polypeptide is Methionine--tRNA ligase (Azotobacter vinelandii (strain DJ / ATCC BAA-1303)).